The sequence spans 279 residues: Dehydrogenase/reductase SDR family member 4 (279 aa).

Residue 37 to 61 (LVTASTDGIGFAIARRLAQDGAHVV) coordinates NADP(+). N6-acetyllysine; alternate is present on Lys93. Lys93 carries the post-translational modification N6-succinyllysine; alternate. An N6-acetyllysine modification is found at Lys106. Residue Ser170 participates in substrate binding. Tyr183 functions as the Proton acceptor in the catalytic mechanism. Position 187 (Lys187) interacts with NADP(+). Ser221 carries the post-translational modification Phosphoserine. Lys235 is modified (N6-succinyllysine). The Peroxisomal targeting signal signature appears at 277–279 (SHL).

It belongs to the short-chain dehydrogenases/reductases (SDR) family. In terms of assembly, homotetramer.

The protein localises to the peroxisome. The enzyme catalyses a secondary alcohol + NADP(+) = a ketone + NADPH + H(+). The catalysed reaction is 3alpha-hydroxy-5beta-pregnan-20-one + NADP(+) = 5beta-pregnan-3,20-dione + NADPH + H(+). It catalyses the reaction 5beta-dihydrotestosterone + NADPH + H(+) = 5beta-androstane-3alpha,17beta-diol + NADP(+). It carries out the reaction all-trans-retinol + NADP(+) = all-trans-retinal + NADPH + H(+). The enzyme catalyses isatin + NADPH + H(+) = 3-hydroxyindolin-2-one + NADP(+). In terms of biological role, NADPH-dependent oxidoreductase which catalyzes the reduction of a variety of compounds bearing carbonyl groups including ketosteroids, alpha-dicarbonyl compounds, aldehydes, aromatic ketones and quinones. Reduces all-trans-retinal and 9-cis retinal. Reduces 3-ketosteroids and benzil into 3alpha-hydroxysteroids and S-benzoin, respectively, in contrast to the stereoselectivity of primates DHRS4s which produce 3beta-hydroxysteroids and R-benzoin. In the reverse reaction, catalyzes the NADP-dependent oxidation of 3alpha-hydroxysteroids and alcohol, but with much lower efficiency. Involved in the metabolism of 3alpha-hydroxysteroids, retinoid, isatin and xenobiotic carbonyl compounds. The polypeptide is Dehydrogenase/reductase SDR family member 4 (DHRS4) (Bos taurus (Bovine)).